Here is a 634-residue protein sequence, read N- to C-terminus: Chaperone protein HtpG (634 aa).

Positions 1 to 342 (MTVASHKETL…SNDLPLNISR (342 aa)) are a; substrate-binding. Positions 343–559 (EILQNNRVID…QHDMSGYLER (217 aa)) are b. The c stretch occupies residues 560–634 (LLKEAGQQAP…LNSLLLAMAD (75 aa)).

Belongs to the heat shock protein 90 family. Homodimer.

It is found in the cytoplasm. Molecular chaperone. Has ATPase activity. This chain is Chaperone protein HtpG, found in Nitrosococcus oceani (strain ATCC 19707 / BCRC 17464 / JCM 30415 / NCIMB 11848 / C-107).